Consider the following 128-residue polypeptide: Aspartate 1-decarboxylase (128 aa).

Ser-25 (schiff-base intermediate with substrate; via pyruvic acid) is an active-site residue. Ser-25 carries the post-translational modification Pyruvic acid (Ser). Thr-57 provides a ligand contact to substrate. Catalysis depends on Tyr-58, which acts as the Proton donor. Position 73–75 (73–75 (GAA)) interacts with substrate.

It belongs to the PanD family. Heterooctamer of four alpha and four beta subunits. Pyruvate serves as cofactor. Is synthesized initially as an inactive proenzyme, which is activated by self-cleavage at a specific serine bond to produce a beta-subunit with a hydroxyl group at its C-terminus and an alpha-subunit with a pyruvoyl group at its N-terminus.

It is found in the cytoplasm. The enzyme catalyses L-aspartate + H(+) = beta-alanine + CO2. It functions in the pathway cofactor biosynthesis; (R)-pantothenate biosynthesis; beta-alanine from L-aspartate: step 1/1. Its function is as follows. Catalyzes the pyruvoyl-dependent decarboxylation of aspartate to produce beta-alanine. The protein is Aspartate 1-decarboxylase of Chlorobium limicola (strain DSM 245 / NBRC 103803 / 6330).